Here is a 536-residue protein sequence, read N- to C-terminus: MFS-type efflux pump MFS1 (536 aa).

3 consecutive transmembrane segments (helical) span residues 30–50 (VTGL…LLVA), 80–100 (YLLT…FFPV), and 102–122 (WVFL…GAAP). Asparagine 123 is a glycosylation site (N-linked (GlcNAc...) asparagine). 3 consecutive transmembrane segments (helical) span residues 133–153 (VAGI…AYSI), 163–183 (GAIG…GGAF), and 191–211 (WCFY…LIFL). N-linked (GlcNAc...) asparagine glycosylation is present at asparagine 221. 8 helical membrane passes run 234-254 (IGTA…QWGG), 264-284 (IIAL…FQIR), 306-326 (FFLF…PIWF), 342-362 (IPMV…VTAI), 366-386 (APLY…LTTF), 400-420 (IIFG…AQAV), 426-446 (VAVG…LFVS), and 503-523 (TWYV…GMEW).

This sequence belongs to the major facilitator superfamily. TCR/Tet family.

It is found in the cell membrane. Functionally, MFS-type efflux pump involved in the modulation susceptibility to azoles, including fluconazole, itraconazole, miconazole and voriconazole. Also confers increased resistance chloramphenicol and thiamphenicol, suggesting that it acts as a pleiotropic drug transporter with a broad substrate spectrum. Finally, increases the tolerance to cycloheximide when expressed in S.cerevisiae, but not in dermatophyte species. This Arthroderma benhamiae (strain ATCC MYA-4681 / CBS 112371) (Trichophyton mentagrophytes) protein is MFS-type efflux pump MFS1.